The sequence spans 95 residues: Class II hydrophobin 3 (95 aa).

The signal sequence occupies residues 1–16 (MKLLAVAALLAGAAIA). 4 disulfide bridges follow: cysteine 28/cysteine 77, cysteine 38/cysteine 68, cysteine 39/cysteine 51, and cysteine 78/cysteine 89.

This sequence belongs to the cerato-ulmin hydrophobin family.

Its subcellular location is the secreted. It is found in the cell wall. Its function is as follows. Aerial growth, conidiation, and dispersal of filamentous fungi in the environment rely upon a capability of their secreting small amphipathic proteins called hydrophobins (HPBs) with low sequence identity. Class I can self-assemble into an outermost layer of rodlet bundles on aerial cell surfaces, conferring cellular hydrophobicity that supports fungal growth, development and dispersal; whereas Class II form highly ordered films at water-air interfaces through intermolecular interactions but contribute nothing to the rodlet structure. Hyd3 plays a neglectable role in hyphal growth and asexual development and does not seem involved in cellular hydrophobicity, conidial adhesion, stress tolerance nor insect pathogenicity. This Metarhizium robertsii (strain ARSEF 23 / ATCC MYA-3075) (Metarhizium anisopliae (strain ARSEF 23)) protein is Class II hydrophobin 3.